The chain runs to 203 residues: Glycerol-3-phosphate acyltransferase (203 aa).

The next 5 membrane-spanning stretches (helical) occupy residues 13-33, 62-82, 88-108, 118-138, and 159-179; these read TLAC…LILT, LAAA…AIAS, AGIA…WLSF, IGVL…IWLA, and IALY…MTAI.

The protein belongs to the PlsY family. In terms of assembly, probably interacts with PlsX.

It localises to the cell inner membrane. The catalysed reaction is an acyl phosphate + sn-glycerol 3-phosphate = a 1-acyl-sn-glycero-3-phosphate + phosphate. The protein operates within lipid metabolism; phospholipid metabolism. Catalyzes the transfer of an acyl group from acyl-phosphate (acyl-PO(4)) to glycerol-3-phosphate (G3P) to form lysophosphatidic acid (LPA). This enzyme utilizes acyl-phosphate as fatty acyl donor, but not acyl-CoA or acyl-ACP. This Rhizobium meliloti (strain 1021) (Ensifer meliloti) protein is Glycerol-3-phosphate acyltransferase.